A 412-amino-acid chain; its full sequence is NADH-quinone oxidoreductase subunit 4 (412 aa).

This sequence belongs to the complex I 49 kDa subunit family. As to quaternary structure, NDH-1 is composed of at least 14 different subunits, Nqo1 to Nqo14. The complex has a L-shaped structure, with the hydrophobic arm (subunits Nqo7, Nqo8, Nqo10 to Nqo14) embedded in the inner membrane and the hydrophilic peripheral arm (subunits Nqo1 to Nqo6, Nqo9) protruding into the bacterial cytoplasm. The hydrophilic domain contains all the redox centers.

Its subcellular location is the cell inner membrane. It catalyses the reaction a quinone + NADH + 5 H(+)(in) = a quinol + NAD(+) + 4 H(+)(out). NDH-1 shuttles electrons from NADH, via FMN and iron-sulfur (Fe-S) centers, to quinones in the respiratory chain. The immediate electron acceptor for the enzyme in this species is believed to be ubiquinone. Couples the redox reaction to proton translocation (for every two electrons transferred, four hydrogen ions are translocated across the cytoplasmic membrane), and thus conserves the redox energy in a proton gradient. The protein is NADH-quinone oxidoreductase subunit 4 (nqo4) of Paracoccus denitrificans.